Here is a 198-residue protein sequence, read N- to C-terminus: Recombination protein RecR (198 aa).

The C4-type zinc-finger motif lies at 57-72 (CSVCGHITDRDPCYIC). The Toprim domain occupies 80–175 (SVVCVVQEPK…KVTRIAHGLP (96 aa)).

Belongs to the RecR family.

In terms of biological role, may play a role in DNA repair. It seems to be involved in an RecBC-independent recombinational process of DNA repair. It may act with RecF and RecO. The polypeptide is Recombination protein RecR (Bacillus cytotoxicus (strain DSM 22905 / CIP 110041 / 391-98 / NVH 391-98)).